A 307-amino-acid polypeptide reads, in one-letter code: Elongation factor Ts (307 aa).

An involved in Mg(2+) ion dislocation from EF-Tu region spans residues 80 to 83; sequence TDFV.

Belongs to the EF-Ts family.

The protein resides in the cytoplasm. Functionally, associates with the EF-Tu.GDP complex and induces the exchange of GDP to GTP. It remains bound to the aminoacyl-tRNA.EF-Tu.GTP complex up to the GTP hydrolysis stage on the ribosome. In Rhodospirillum centenum (strain ATCC 51521 / SW), this protein is Elongation factor Ts.